Reading from the N-terminus, the 555-residue chain is CTP synthase (555 aa).

The amidoligase domain stretch occupies residues 1 to 277; sequence MPKEPETEYD…DQHVMERLNV (277 aa). CTP is bound at residue Ser-26. Residue Ser-26 participates in UTP binding. ATP is bound at residue 27–32; that stretch reads GLGKGI. Tyr-67 provides a ligand contact to L-glutamine. Asp-84 contributes to the ATP binding site. Mg(2+) is bound by residues Asp-84 and Glu-152. Residues 159–161, 198–203, and Lys-234 each bind CTP; these read DIE and KTKPTQ. Residues 198 to 203 and Lys-234 contribute to the UTP site; that span reads KTKPTQ. In terms of domain architecture, Glutamine amidotransferase type-1 spans 307-542; the sequence is LVGKYDLEDA…LKSVDSTLDA (236 aa). An L-glutamine-binding site is contributed by Gly-364. Cys-391 serves as the catalytic Nucleophile; for glutamine hydrolysis. Residues 392–395, Glu-415, and Arg-472 each bind L-glutamine; that span reads LGFQ. Catalysis depends on residues His-515 and Glu-517.

This sequence belongs to the CTP synthase family. In terms of assembly, homotetramer.

It carries out the reaction UTP + L-glutamine + ATP + H2O = CTP + L-glutamate + ADP + phosphate + 2 H(+). The catalysed reaction is L-glutamine + H2O = L-glutamate + NH4(+). The enzyme catalyses UTP + NH4(+) + ATP = CTP + ADP + phosphate + 2 H(+). It participates in pyrimidine metabolism; CTP biosynthesis via de novo pathway; CTP from UDP: step 2/2. Allosterically activated by GTP, when glutamine is the substrate; GTP has no effect on the reaction when ammonia is the substrate. The allosteric effector GTP functions by stabilizing the protein conformation that binds the tetrahedral intermediate(s) formed during glutamine hydrolysis. Inhibited by the product CTP, via allosteric rather than competitive inhibition. Functionally, catalyzes the ATP-dependent amination of UTP to CTP with either L-glutamine or ammonia as the source of nitrogen. Regulates intracellular CTP levels through interactions with the four ribonucleotide triphosphates. This is CTP synthase from Haloquadratum walsbyi (strain DSM 16790 / HBSQ001).